A 113-amino-acid chain; its full sequence is Putative pterin-4-alpha-carbinolamine dehydratase (113 aa).

Belongs to the pterin-4-alpha-carbinolamine dehydratase family.

The catalysed reaction is (4aS,6R)-4a-hydroxy-L-erythro-5,6,7,8-tetrahydrobiopterin = (6R)-L-erythro-6,7-dihydrobiopterin + H2O. The polypeptide is Putative pterin-4-alpha-carbinolamine dehydratase (Legionella pneumophila (strain Paris)).